A 369-amino-acid chain; its full sequence is Homoserine O-succinyltransferase (369 aa).

An important for substrate specificity region spans residues 90-93 (GISA). The AB hydrolase-1 domain maps to 107 to 353 (WWSGAVGVRA…YGHDAFLKED (247 aa)). Serine 175 serves as the catalytic Nucleophile. Arginine 236 contacts substrate. Residues aspartate 316 and histidine 346 contribute to the active site. A substrate-binding site is contributed by aspartate 347.

It belongs to the AB hydrolase superfamily. MetX family. As to quaternary structure, homodimer.

It localises to the cytoplasm. The catalysed reaction is L-homoserine + succinyl-CoA = O-succinyl-L-homoserine + CoA. It participates in amino-acid biosynthesis; L-methionine biosynthesis via de novo pathway; O-succinyl-L-homoserine from L-homoserine: step 1/1. In terms of biological role, transfers a succinyl group from succinyl-CoA to L-homoserine, forming succinyl-L-homoserine. The protein is Homoserine O-succinyltransferase of Brevundimonas diminuta (strain ATCC 11568 / DSM 7234 / NBRC 12697 / NCIMB 9393 / NCTC 8545).